The sequence spans 70 residues: Large ribosomal subunit protein eL38 (70 aa).

Lys-4 is covalently cross-linked (Glycyl lysine isopeptide (Lys-Gly) (interchain with G-Cter in SUMO2)). Lys-9 bears the N6-acetyllysine; alternate mark. Lys-9 participates in a covalent cross-link: Glycyl lysine isopeptide (Lys-Gly) (interchain with G-Cter in SUMO2); alternate. Lys-67 carries the N6-acetyllysine modification.

It belongs to the eukaryotic ribosomal protein eL38 family. As to quaternary structure, component of the large ribosomal subunit.

It localises to the cytoplasm. Its function is as follows. Component of the large ribosomal subunit. The ribosome is a large ribonucleoprotein complex responsible for the synthesis of proteins in the cell. The protein is Large ribosomal subunit protein eL38 (Rpl38) of Mus musculus (Mouse).